Reading from the N-terminus, the 156-residue chain is Phosphopantetheine adenylyltransferase (156 aa).

T10 provides a ligand contact to substrate. ATP contacts are provided by residues 10–11 (TF) and H18. Substrate is bound by residues K42, L74, and R88. ATP-binding positions include 89-91 (GIR), E99, and 124-130 (WAFISSS).

It belongs to the bacterial CoaD family. Homohexamer. Mg(2+) serves as cofactor.

It is found in the cytoplasm. It carries out the reaction (R)-4'-phosphopantetheine + ATP + H(+) = 3'-dephospho-CoA + diphosphate. It participates in cofactor biosynthesis; coenzyme A biosynthesis; CoA from (R)-pantothenate: step 4/5. In terms of biological role, reversibly transfers an adenylyl group from ATP to 4'-phosphopantetheine, yielding dephospho-CoA (dPCoA) and pyrophosphate. The chain is Phosphopantetheine adenylyltransferase from Hamiltonella defensa subsp. Acyrthosiphon pisum (strain 5AT).